A 212-amino-acid polypeptide reads, in one-letter code: uncharacterized protein (212 aa).

The disordered stretch occupies residues 1-88 (MAEEQKIALE…PAPAKPASAS (88 aa)). The residue at position 13 (Ser13) is a Phosphoserine. The span at 23–41 (ADTPAPAPAEIPAPAPAPT) shows a compositional bias: pro residues. A compositionally biased stretch (basic and acidic residues) spans 45-54 (VTKDVAEEKI).

Belongs to the remorin family.

It localises to the cell membrane. This is an uncharacterized protein from Arabidopsis thaliana (Mouse-ear cress).